Here is a 366-residue protein sequence, read N- to C-terminus: 5-hydroxytryptamine receptor 1F (366 aa).

At 1 to 24 the chain is on the extracellular side; sequence MDFLNASDQNLTSEELLNRMPSKI. Asn5 and Asn10 each carry an N-linked (GlcNAc...) asparagine glycan. A helical membrane pass occupies residues 25–49; that stretch reads LVSLTLSGLALMTTTINSLVIAAII. At 50–59 the chain is on the cytoplasmic side; the sequence is VTRKLHHPAN. The helical transmembrane segment at 60–81 threads the bilayer; sequence YLICSLAVTDFLVAVLVMPFSI. At 82–96 the chain is on the extracellular side; that stretch reads VYIVRESWIMGQVLC. Cys96 and Cys172 are oxidised to a cystine. A helical transmembrane segment spans residues 97-119; sequence DIWLSVDIICCTCSILHLSAIAL. Serotonin is bound by residues Asp103 and Cys107. Residues 120 to 122 carry the DRY motif; important for ligand-induced conformation changes motif; sequence DRY. Residues 120-139 lie on the Cytoplasmic side of the membrane; the sequence is DRYRAITDAVEYARKRTPRH. The chain crosses the membrane as a helical span at residues 140–159; the sequence is AGIMITIVWVISVFISMPPL. Residues 160–178 are Extracellular-facing; that stretch reads FWRHQGTSRDDECVIKHDH. A helical transmembrane segment spans residues 179–202; it reads IVSTIYSTFGAFYIPLVLILILYY. The Cytoplasmic portion of the chain corresponds to 203-291; the sequence is KIYRAARTLY…KISGTRERKA (89 aa). The chain crosses the membrane as a helical span at residues 292-315; that stretch reads ATTLGLILGAFVICWLPFFVKELV. Topologically, residues 316–327 are extracellular; it reads VNVCEKCKISEE. The chain crosses the membrane as a helical span at residues 328–350; the sequence is MSNFLAWLGYLNSLINPLIYTIF. The short motif at 343–347 is the NPxxY motif; important for ligand-induced conformation changes and signaling element; the sequence is NPLIY. Over 351–366 the chain is Cytoplasmic; the sequence is NEDFKKAFQKLVRCRY.

The protein belongs to the G-protein coupled receptor 1 family. In terms of tissue distribution, detected in hippocampus.

It is found in the cell membrane. G-protein coupled receptor for 5-hydroxytryptamine (serotonin). Also functions as a receptor for various alkaloids and psychoactive substances. Ligand binding causes a conformation change that triggers signaling via guanine nucleotide-binding proteins (G proteins) and modulates the activity of downstream effectors, such as adenylate cyclase. HTR1F is coupled to G(i)/G(o) G alpha proteins and mediates inhibitory neurotransmission by inhibiting adenylate cyclase activity. This is 5-hydroxytryptamine receptor 1F (Htr1f) from Mus musculus (Mouse).